Reading from the N-terminus, the 378-residue chain is C-type lectin domain family 17, member A (378 aa).

The interval 1 to 119 (MHNLYSITGY…PPLPCKPRNM (119 aa)) is disordered. Residues 1-172 (MHNLYSITGY…GCCQKRWMVY (172 aa)) are Cytoplasmic-facing. 3 stretches are compositionally biased toward acidic residues: residues 17-27 (MEEEEEDDDYE), 43-53 (MEEEEEDDDYE), and 69-79 (MEEEEEDDDYE). Residues 86–101 (KDLPPKPGSSAPPRPP) are compositionally biased toward pro residues. The chain crosses the membrane as a helical; Signal-anchor for type II membrane protein span at residues 173 to 193 (LCLLVVTSLFLGCLGLTVTLI). The Extracellular portion of the chain corresponds to 194-378 (KYQELMEELR…YWICERKCSC (185 aa)). N-linked (GlcNAc...) asparagine glycosylation is found at Asn215 and Asn237. Cystine bridges form between Cys254–Cys265, Cys282–Cys372, and Cys350–Cys364. In terms of domain architecture, C-type lectin spans 261-373 (FEGKCYYFSP…CYKTTYWICE (113 aa)). The N-linked (GlcNAc...) asparagine glycan is linked to Asn285. Ca(2+) is bound by residues Glu341, Asn343, Glu348, Asn360, and Asp361.

As to quaternary structure, oligomer; disulfide-linked. In terms of processing, phosphorylated on tyrosine residues. Expressed on dividing B-cells of germinal centers in various tissues, including lymph nodes, tonsils, stomach, intestine, appendix and spleen.

It is found in the membrane. In terms of biological role, cell surface receptor which may be involved in carbohydrate-mediated communication between cells in the germinal center. Binds glycans with terminal alpha-linked mannose or fucose residues. In Homo sapiens (Human), this protein is C-type lectin domain family 17, member A (CLEC17A).